The chain runs to 149 residues: D-aminoacyl-tRNA deacylase (149 aa).

A Gly-cisPro motif, important for rejection of L-amino acids motif is present at residues 137–138 (GP).

Belongs to the DTD family. Homodimer.

The protein resides in the cytoplasm. It catalyses the reaction glycyl-tRNA(Ala) + H2O = tRNA(Ala) + glycine + H(+). The enzyme catalyses a D-aminoacyl-tRNA + H2O = a tRNA + a D-alpha-amino acid + H(+). An aminoacyl-tRNA editing enzyme that deacylates mischarged D-aminoacyl-tRNAs. Also deacylates mischarged glycyl-tRNA(Ala), protecting cells against glycine mischarging by AlaRS. Acts via tRNA-based rather than protein-based catalysis; rejects L-amino acids rather than detecting D-amino acids in the active site. By recycling D-aminoacyl-tRNA to D-amino acids and free tRNA molecules, this enzyme counteracts the toxicity associated with the formation of D-aminoacyl-tRNA entities in vivo and helps enforce protein L-homochirality. This is D-aminoacyl-tRNA deacylase from Syntrophus aciditrophicus (strain SB).